The chain runs to 329 residues: Lipoyl synthase (329 aa).

Residues 1–23 form a disordered region; it reads MTDLTATPAPAEPAASAYDPTAK. [4Fe-4S] cluster-binding residues include Cys76, Cys81, Cys87, Cys102, Cys106, Cys109, and Ser316. The Radical SAM core domain maps to 87-305; sequence CFGKGTATFM…EEEAYKMGFT (219 aa).

Belongs to the radical SAM superfamily. Lipoyl synthase family. Requires [4Fe-4S] cluster as cofactor.

The protein localises to the cytoplasm. The enzyme catalyses [[Fe-S] cluster scaffold protein carrying a second [4Fe-4S](2+) cluster] + N(6)-octanoyl-L-lysyl-[protein] + 2 oxidized [2Fe-2S]-[ferredoxin] + 2 S-adenosyl-L-methionine + 4 H(+) = [[Fe-S] cluster scaffold protein] + N(6)-[(R)-dihydrolipoyl]-L-lysyl-[protein] + 4 Fe(3+) + 2 hydrogen sulfide + 2 5'-deoxyadenosine + 2 L-methionine + 2 reduced [2Fe-2S]-[ferredoxin]. It participates in protein modification; protein lipoylation via endogenous pathway; protein N(6)-(lipoyl)lysine from octanoyl-[acyl-carrier-protein]: step 2/2. Functionally, catalyzes the radical-mediated insertion of two sulfur atoms into the C-6 and C-8 positions of the octanoyl moiety bound to the lipoyl domains of lipoate-dependent enzymes, thereby converting the octanoylated domains into lipoylated derivatives. In Burkholderia pseudomallei (strain 1106a), this protein is Lipoyl synthase.